A 425-amino-acid chain; its full sequence is Serine--tRNA ligase (425 aa).

Residue 230-232 coordinates L-serine; it reads TAE. 261–263 serves as a coordination point for ATP; that stretch reads RSE. E284 is a binding site for L-serine. 348 to 351 contacts ATP; sequence EISS. Position 384 (S384) interacts with L-serine.

Belongs to the class-II aminoacyl-tRNA synthetase family. Type-1 seryl-tRNA synthetase subfamily. As to quaternary structure, homodimer. The tRNA molecule binds across the dimer.

The protein resides in the cytoplasm. The enzyme catalyses tRNA(Ser) + L-serine + ATP = L-seryl-tRNA(Ser) + AMP + diphosphate + H(+). It carries out the reaction tRNA(Sec) + L-serine + ATP = L-seryl-tRNA(Sec) + AMP + diphosphate + H(+). Its pathway is aminoacyl-tRNA biosynthesis; selenocysteinyl-tRNA(Sec) biosynthesis; L-seryl-tRNA(Sec) from L-serine and tRNA(Sec): step 1/1. Catalyzes the attachment of serine to tRNA(Ser). Is also able to aminoacylate tRNA(Sec) with serine, to form the misacylated tRNA L-seryl-tRNA(Sec), which will be further converted into selenocysteinyl-tRNA(Sec). The protein is Serine--tRNA ligase of Streptococcus agalactiae serotype Ia (strain ATCC 27591 / A909 / CDC SS700).